We begin with the raw amino-acid sequence, 317 residues long: tRNA dimethylallyltransferase (317 aa).

14 to 21 (GPTASGKT) is an ATP binding site. Residue 16–21 (TASGKT) coordinates substrate. Interaction with substrate tRNA regions lie at residues 39-42 (DSAL) and 163-167 (QRIQR).

The protein belongs to the IPP transferase family. In terms of assembly, monomer. It depends on Mg(2+) as a cofactor.

It catalyses the reaction adenosine(37) in tRNA + dimethylallyl diphosphate = N(6)-dimethylallyladenosine(37) in tRNA + diphosphate. In terms of biological role, catalyzes the transfer of a dimethylallyl group onto the adenine at position 37 in tRNAs that read codons beginning with uridine, leading to the formation of N6-(dimethylallyl)adenosine (i(6)A). The polypeptide is tRNA dimethylallyltransferase (Stenotrophomonas maltophilia (strain R551-3)).